The chain runs to 303 residues: Nucleotide-binding protein Dvul_1502 (303 aa).

23 to 30 serves as a coordination point for ATP; that stretch reads GLSGAGKS. 75-78 is a GTP binding site; sequence DLRE.

The protein belongs to the RapZ-like family.

In terms of biological role, displays ATPase and GTPase activities. This Nitratidesulfovibrio vulgaris (strain DP4) (Desulfovibrio vulgaris) protein is Nucleotide-binding protein Dvul_1502.